Consider the following 332-residue polypeptide: MDPRSEVLLRQPELFQGSLLLVGLPADDLLGKLPNARGWCWHAGDQAALDARFEGRVDFGVEAPEATFEAAVLFLPKARDLTDYLLNALASRLAGRELFLVGEKRGGIEAAAKQLSPFGRARKLDSARHCQLWQVTVENAPQAVTLESLARPYQIELQDGPLTVISLPGVFSHGRLDRGSALLLENIDKLPSGNLLDFGCGAGVLGAAVKRRYPHNDVVMLDVDAFATASSRLTLAANGLEAQVVTGDGIDAAPMGLNTILSNPPFHVGVHTDYMATENLLKKARQHLKSGGELRLVANNFLRYQPLIEEHVGYCHVKAQGNGFKIYSAKRS.

It belongs to the methyltransferase superfamily. RsmC family. Monomer.

The protein localises to the cytoplasm. The catalysed reaction is guanosine(1207) in 16S rRNA + S-adenosyl-L-methionine = N(2)-methylguanosine(1207) in 16S rRNA + S-adenosyl-L-homocysteine + H(+). Specifically methylates the guanine in position 1207 of 16S rRNA in the 30S particle. In Pseudomonas syringae pv. tomato (strain ATCC BAA-871 / DC3000), this protein is Ribosomal RNA small subunit methyltransferase C.